The primary structure comprises 196 residues: Molybdenum cofactor guanylyltransferase (196 aa).

Residues 10–12, Lys23, Asn51, Asp69, and Asp99 contribute to the GTP site; that span reads LAG. Asp99 is a binding site for Mg(2+).

The protein belongs to the MobA family. As to quaternary structure, monomer. Mg(2+) is required as a cofactor.

The protein resides in the cytoplasm. It catalyses the reaction Mo-molybdopterin + GTP + H(+) = Mo-molybdopterin guanine dinucleotide + diphosphate. Functionally, transfers a GMP moiety from GTP to Mo-molybdopterin (Mo-MPT) cofactor (Moco or molybdenum cofactor) to form Mo-molybdopterin guanine dinucleotide (Mo-MGD) cofactor. In Shewanella amazonensis (strain ATCC BAA-1098 / SB2B), this protein is Molybdenum cofactor guanylyltransferase.